The following is a 690-amino-acid chain: DNA ligase (690 aa).

NAD(+) is bound by residues 43-47 (DAEYD), 92-93 (SI), and E129. K131 functions as the N6-AMP-lysine intermediate in the catalytic mechanism. 4 residues coordinate NAD(+): R152, E188, K309, and K333. Zn(2+)-binding residues include C427, C430, C445, and C451. Positions 610–690 (VTPTPLSGKT…GLKELLDGHS (81 aa)) constitute a BRCT domain.

The protein belongs to the NAD-dependent DNA ligase family. LigA subfamily. Mg(2+) serves as cofactor. Requires Mn(2+) as cofactor.

The catalysed reaction is NAD(+) + (deoxyribonucleotide)n-3'-hydroxyl + 5'-phospho-(deoxyribonucleotide)m = (deoxyribonucleotide)n+m + AMP + beta-nicotinamide D-nucleotide.. Functionally, DNA ligase that catalyzes the formation of phosphodiester linkages between 5'-phosphoryl and 3'-hydroxyl groups in double-stranded DNA using NAD as a coenzyme and as the energy source for the reaction. It is essential for DNA replication and repair of damaged DNA. The polypeptide is DNA ligase (Albidiferax ferrireducens (strain ATCC BAA-621 / DSM 15236 / T118) (Rhodoferax ferrireducens)).